The following is a 342-amino-acid chain: Ribosomal RNA small subunit methyltransferase C (342 aa).

It belongs to the methyltransferase superfamily. RsmC family. As to quaternary structure, monomer.

It is found in the cytoplasm. It carries out the reaction guanosine(1207) in 16S rRNA + S-adenosyl-L-methionine = N(2)-methylguanosine(1207) in 16S rRNA + S-adenosyl-L-homocysteine + H(+). Functionally, specifically methylates the guanine in position 1207 of 16S rRNA in the 30S particle. The polypeptide is Ribosomal RNA small subunit methyltransferase C (Shewanella sp. (strain MR-7)).